We begin with the raw amino-acid sequence, 389 residues long: Probable nitrate transporter NarT (389 aa).

The next 12 membrane-spanning stretches (helical) occupy residues 14-34 (TLSL…MPFI), 45-65 (ISII…PFGY), 69-89 (IVGA…PIFF), 97-117 (GMLM…SVGV), 139-159 (GNIG…IIGW), 161-181 (TTVR…FIFG), 211-231 (WYFI…NYLV), 246-266 (GVFI…GDKF), 268-288 (AVKV…ILGI), 294-314 (LFTV…GLIF), 331-351 (IVSM…TYVA), and 353-373 (LTGS…IALF).

The protein belongs to the major facilitator superfamily. Nitrate/nitrite porter (TC 2.A.1.8) family.

The protein localises to the cell membrane. Probably required for nitrate uptake under anoxic conditions. Also possibly involved in excretion of nitrite produced by the dissimilatory reduction of nitrate. This Staphylococcus aureus (strain MRSA252) protein is Probable nitrate transporter NarT (narT).